A 1187-amino-acid chain; its full sequence is Non-receptor tyrosine-protein kinase TYK2 (1187 aa).

The 406-residue stretch at 26-431 (GGLKVLLHWA…GYFRLTADSS (406 aa)) folds into the FERM domain. Phosphotyrosine is present on Y292. The segment at 335–366 (KEEGSSGSSGRNPQASLFGKKAKAHKAVGQPA) is disordered. A compositionally biased stretch (polar residues) spans 339-349 (SSGSSGRNPQA). In terms of domain architecture, SH2; atypical spans 450 to 529 (GIHGPLLEPF…GRSFPSVREL (80 aa)). A phosphoserine mark is found at S499 and S525. One can recognise a Protein kinase 1 domain in the interval 589–875 (ITQLSHLGQG…LTRLQPHNLA (287 aa)). Y604 carries the post-translational modification Phosphotyrosine. A disordered region spans residues 610–629 (VEGSGDPEEGKMDDEDPLVP). Over residues 614–626 (GDPEEGKMDDEDP) the composition is skewed to acidic residues. S884 is subject to Phosphoserine. Residues 897–1176 (LKKIRDLGEG…PILKTVHEKY (280 aa)) enclose the Protein kinase 2 domain. ATP is bound by residues 903–911 (LGEGHFGKV) and K930. D1023 (proton acceptor) is an active-site residue. The residue at position 1054 (Y1054) is a Phosphotyrosine; by autocatalysis. Phosphotyrosine is present on Y1055.

This sequence belongs to the protein kinase superfamily. Tyr protein kinase family. JAK subfamily. As to quaternary structure, interacts (via FERM domain) with JAKMIP1. Interacts with PIK3R1; this interaction is important for cell migration. Interacts with MPL/TPOR. In terms of assembly, (Microbial infection) Interacts with Epstein-Barr virus protein LMP1; this interaction inhibits TYK2-mediated interferon signaling. (Microbial infection) Interacts with papillomavirus-18 protein E6; this interaction impairs JAK-STAT activation by interferon-alpha. As to quaternary structure, (Microbial infection) Interacts with Epstein-Barr virus (EBV) tegument protein BGLF2; this interaction participates in the inhibition of type I IFN signaling by the virus. In terms of processing, phosphorylated. Phosphorylation by JAK1 at Tyr-1054 and Tyr-1055 induces kinase activation. As to expression, observed in all cell lines analyzed. Expressed in a variety of lymphoid and non-lymphoid cell lines.

It carries out the reaction L-tyrosyl-[protein] + ATP = O-phospho-L-tyrosyl-[protein] + ADP + H(+). Its activity is regulated as follows. The protein kinase 1 domain (also termed pseudokinase domain) mediates autoinhibition of the TYK2 kinase domain. Its function is as follows. Tyrosine kinase of the non-receptor type involved in numerous cytokines and interferons signaling, which regulates cell growth, development, cell migration, innate and adaptive immunity. Plays both structural and catalytic roles in numerous interleukins and interferons (IFN-alpha/beta) signaling. Associates with heterodimeric cytokine receptor complexes and activates STAT family members including STAT1, STAT3, STAT4 or STAT6. The heterodimeric cytokine receptor complexes are composed of (1) a TYK2-associated receptor chain (IFNAR1, IL12RB1, IL10RB or IL13RA1), and (2) a second receptor chain associated either with JAK1 or JAK2. In response to cytokine-binding to receptors, phosphorylates and activates receptors (IFNAR1, IL12RB1, IL10RB or IL13RA1), creating docking sites for STAT members. In turn, recruited STATs are phosphorylated by TYK2 (or JAK1/JAK2 on the second receptor chain), form homo- and heterodimers, translocate to the nucleus, and regulate cytokine/growth factor responsive genes. Negatively regulates STAT3 activity by promototing phosphorylation at a specific tyrosine that differs from the site used for signaling. The polypeptide is Non-receptor tyrosine-protein kinase TYK2 (TYK2) (Homo sapiens (Human)).